The sequence spans 416 residues: MSDEQKKPEQIHRRDILKWGAMAGAAVAIGASGLGGLAPLVQTAAKPSKKDEKEEEQIVPFYGKHQAGITTAHQTYVYFAALDVTAKDKSDIITLFRNWTSLTQMLTSGKKMSAEQRNQYLPPQDTGESADLSPSNLTVTFGFGPGFFEKDGKDRFGLKSKKPKHLAALPAMPNDNLDEKQGGGDICIQVCADDEQVAFHALRNLLNQAVGTCEVRFVNKGFLSGGKNGETPRNLFGFKDGTGNQSTKDDTLMNSIVWIQSGEPDWMTGGTYMAFRKIKMFLEVWDRSSLKDQEDTFGRRKSSGAPFGQKKETDPVKLNQIPSNSHVSLAKSTGKQILRRAFSYTEGLDPKTGYMDAGLLFISFQKNPDNQFIPMLKALSAKDALNEYTQTIGSALYACPGGCKKGEYIAQRLLES.

A signal peptide (tat-type signal) is located at residues 1-28; that stretch reads MSDEQKKPEQIHRRDILKWGAMAGAAVA. A heme b-binding site is contributed by 241–243; sequence GTG. A disordered region spans residues 293-318; that stretch reads QEDTFGRRKSSGAPFGQKKETDPVKL. Heme b-binding residues include histidine 326 and arginine 339.

The protein belongs to the DyP-type peroxidase family. In terms of assembly, component of the iron transporter efeUOB/M complex composed of EfeU, EfeM and EfeB; EfeU is essential for the complex formation. Heme b is required as a cofactor. Post-translationally, exported by the Tat system. The position of the signal peptide cleavage has not been experimentally proven.

The protein resides in the secreted. It localises to the cell membrane. It carries out the reaction heme b + 2 H(+) = protoporphyrin IX + Fe(2+). It catalyses the reaction 2 Fe(2+) + H2O2 + 2 H(+) = 2 Fe(3+) + 2 H2O. Its function is as follows. Involved in the recovery of exogenous heme iron. Extracts iron from heme while preserving the protoporphyrin ring intact. Part of the iron transporter system efeUOB/M involved in iron import. Catalyzes the peroxide-mediated oxidation of Fe(2+) into Fe(3+); EfeM binds Fe(3+) and delivers it to the cell membrane permease EfeU. The protein is Deferrochelatase of Bacillus subtilis (strain 168).